A 119-amino-acid chain; its full sequence is Large ribosomal subunit protein bL19 (119 aa).

It belongs to the bacterial ribosomal protein bL19 family.

Its function is as follows. This protein is located at the 30S-50S ribosomal subunit interface and may play a role in the structure and function of the aminoacyl-tRNA binding site. The sequence is that of Large ribosomal subunit protein bL19 from Sulfurovum sp. (strain NBC37-1).